We begin with the raw amino-acid sequence, 519 residues long: Putative cytochrome P450 CYP13A1 (519 aa).

Position 465 (Cys465) interacts with heme.

It belongs to the cytochrome P450 family. It depends on heme as a cofactor.

Functionally, cytochromes P450 are a group of heme-thiolate monooxygenases. They oxidize a variety of structurally unrelated compounds, including steroids, fatty acids, and xenobiotics. This chain is Putative cytochrome P450 CYP13A1 (cyp-13A1), found in Caenorhabditis elegans.